Here is a 377-residue protein sequence, read N- to C-terminus: Uroporphyrinogen decarboxylase (377 aa).

Residues 40 to 44 (RQAGR), Asp-89, Tyr-169, Ser-224, and His-354 contribute to the substrate site.

Belongs to the uroporphyrinogen decarboxylase family. As to quaternary structure, homodimer.

Its subcellular location is the cytoplasm. The enzyme catalyses uroporphyrinogen III + 4 H(+) = coproporphyrinogen III + 4 CO2. It participates in porphyrin-containing compound metabolism; protoporphyrin-IX biosynthesis; coproporphyrinogen-III from 5-aminolevulinate: step 4/4. Functionally, catalyzes the decarboxylation of four acetate groups of uroporphyrinogen-III to yield coproporphyrinogen-III. The chain is Uroporphyrinogen decarboxylase from Leifsonia xyli subsp. xyli (strain CTCB07).